Here is a 429-residue protein sequence, read N- to C-terminus: Xyloglucan O-acetyltransferase 1 (429 aa).

At 1 to 20 the chain is on the cytoplasmic side; sequence MGSPFKDHHHHHHPFSLAKK. The helical; Signal-anchor for type II membrane protein transmembrane segment at 21-41 threads the bilayer; sequence LIPWTFYAMIPLVLFRLYFYP. Residues 42–429 lie on the Lumenal side of the membrane; the sequence is YPLHNITTPI…KWDYESRREE (388 aa). Asn46 and Asn89 each carry an N-linked (GlcNAc...) asparagine glycan. Cystine bridges form between Cys72–Cys122, Cys93–Cys158, Cys102–Cys402, and Cys317–Cys398. Positions 145 to 147 match the GDS motif motif; the sequence is GDS. The active-site Nucleophile is the Ser147. 3 N-linked (GlcNAc...) asparagine glycosylation sites follow: Asn189, Asn263, and Asn351. The active-site Proton donor is the Asp397. Positions 397–400 match the DXXH motif motif; sequence DCVH. His400 (proton acceptor) is an active-site residue.

The protein belongs to the PC-esterase family. TBL subfamily.

The protein resides in the golgi apparatus membrane. Its function is as follows. Xyloglucan acetyltransferase that catalyzes the acetylation of fucosylated Gal residues on xyloglucan side chains. Predominantly catalyze 6-O-monoacetylation of Gal residues in the Fuc-Gal-Xyl trisaccharide side chains of xyloglucan oligomers. This is Xyloglucan O-acetyltransferase 1 from Populus trichocarpa (Western balsam poplar).